The sequence spans 388 residues: Staphopain A (388 aa).

Positions 1–25 (MKRNFPKLIALSLILSLSVTPIANA) are cleaved as a signal peptide. Residues 26-214 (ESNSNIKAKD…TSQFKSNNYT (189 aa)) constitute a propeptide that is removed on maturation. Active-site residues include Cys238, His334, and Asn355.

This sequence belongs to the peptidase C47 family. In terms of assembly, in the cytoplasm, prematurely activated/folded ScpA forms a stable non-covalent complex with ScpB. Post-translationally, cleavage leads to the activation of ScpA probably by an auto-catalytic manner.

Its subcellular location is the secreted. It carries out the reaction Broad endopeptidase action on proteins including elastin, but rather limited hydrolysis of small-molecule substrates. Assays are conveniently made with hemoglobin, casein or Z-Phe-Arg-NHMec as substrate.. Its activity is regulated as follows. Prematurely activated/folded staphopain A is inhibited by staphostatin A (ScpB), which is probably required to protect staphylococcal cytoplasmic proteins from degradation by ScpA. In terms of biological role, cysteine protease that plays an important role in the inhibition of host innate immune response. Cleaves host elastins found in connective tissues, pulmonary surfactant protein A in the lungs, and the chemokine receptor CXCR2 on leukocytes. Proteolytic cleavage of surfactant protein A impairs bacterial phagocytosis by neutrophils while CXCR2 degradation blocks neutrophil activation and chemotaxis. Additionally, promotes vascular leakage by activating the plasma kallikerin/kinin system, resulting in hypotension. This is Staphopain A (sspP) from Staphylococcus aureus (strain MSSA476).